A 251-amino-acid chain; its full sequence is Transcription factor bHLH144 (251 aa).

3 disordered regions span residues 1–20 (MQNN…NMHN), 130–161 (YEEN…YGNT), and 173–202 (NNNN…RKKM). A compositionally biased stretch (basic and acidic residues) spans 9–18 (FSDEVGDRNM). Over residues 130 to 147 (YEENDDNEGEEDGGDSEE) the composition is skewed to acidic residues. Residues 148 to 161 (VSTARTSSRDYGNT) are compositionally biased toward polar residues. A compositionally biased stretch (low complexity) spans 173-192 (NNNNNNNSRKQSLSGSASSS). The region spanning 186-235 (SGSASSSNNDGKGRKKMKKMMGVLRRIVPGGEQMNTACVLDEAVQYLKSL) is the bHLH domain.

As to quaternary structure, homodimer. Interacts with LHW.

The protein resides in the nucleus. The sequence is that of Transcription factor bHLH144 (BHLH144) from Arabidopsis thaliana (Mouse-ear cress).